The sequence spans 269 residues: Tryptophan synthase alpha chain (269 aa).

Residues glutamate 49 and aspartate 60 each act as proton acceptor in the active site.

It belongs to the TrpA family. As to quaternary structure, tetramer of two alpha and two beta chains.

The enzyme catalyses (1S,2R)-1-C-(indol-3-yl)glycerol 3-phosphate + L-serine = D-glyceraldehyde 3-phosphate + L-tryptophan + H2O. The protein operates within amino-acid biosynthesis; L-tryptophan biosynthesis; L-tryptophan from chorismate: step 5/5. In terms of biological role, the alpha subunit is responsible for the aldol cleavage of indoleglycerol phosphate to indole and glyceraldehyde 3-phosphate. The chain is Tryptophan synthase alpha chain from Photobacterium profundum (strain SS9).